The following is a 198-amino-acid chain: Holliday junction branch migration complex subunit RuvA (198 aa).

Positions Met-1 to His-63 are domain I. The tract at residues Ser-64–Leu-142 is domain II. Positions Pro-143–His-147 are flexible linker. The tract at residues Gln-148–Gly-198 is domain III.

It belongs to the RuvA family. As to quaternary structure, homotetramer. Forms an RuvA(8)-RuvB(12)-Holliday junction (HJ) complex. HJ DNA is sandwiched between 2 RuvA tetramers; dsDNA enters through RuvA and exits via RuvB. An RuvB hexamer assembles on each DNA strand where it exits the tetramer. Each RuvB hexamer is contacted by two RuvA subunits (via domain III) on 2 adjacent RuvB subunits; this complex drives branch migration. In the full resolvosome a probable DNA-RuvA(4)-RuvB(12)-RuvC(2) complex forms which resolves the HJ.

The protein localises to the cytoplasm. Functionally, the RuvA-RuvB-RuvC complex processes Holliday junction (HJ) DNA during genetic recombination and DNA repair, while the RuvA-RuvB complex plays an important role in the rescue of blocked DNA replication forks via replication fork reversal (RFR). RuvA specifically binds to HJ cruciform DNA, conferring on it an open structure. The RuvB hexamer acts as an ATP-dependent pump, pulling dsDNA into and through the RuvAB complex. HJ branch migration allows RuvC to scan DNA until it finds its consensus sequence, where it cleaves and resolves the cruciform DNA. The protein is Holliday junction branch migration complex subunit RuvA of Streptococcus equi subsp. zooepidemicus (strain MGCS10565).